A 281-amino-acid polypeptide reads, in one-letter code: Probable thioesterase gloN (281 aa).

The tract at residues Leu-207 to Ala-233 is disordered. Residues Gly-210–Gln-232 show a composition bias toward polar residues.

Belongs to the AMT4 thioesterase family.

It functions in the pathway mycotoxin biosynthesis. In terms of biological role, probable thioesterase; part of the gene cluster that mediates the biosynthesis of pneumocandins, lipohexapeptides of the echinocandin family that prevent fungal cell wall formation by non-competitive inhibition of beta-1,3-glucan synthase. The 10,12-dimethylmyristoyl side chain is synthesized by the reducing polyketide synthase gloL/GLPKS4. The thioesterase gloN/GLHYD exclusively interacts with gloL/GLPKS4 to maintain turnover of the polyketide side chain. The 10R,12S-dimethylmyristic acid is then transferred to the first thiolation domain of the nonribosomal peptide synthetase gloA/GLNRPS4 by the acyl-AMP ligase gloD/GLligase, followed by its acylation to L-ornithine to trigger elongation of the cyclic hexapeptide. L-ornithine, 4R-hydroxyl-L-proline (generated from L-proline by the dioxygenase gloF/GLOXY2), 3S-hydroxyl-L-homotyrosine (generated by gloG/GLHtyB, gloH/GLHtyA, gloI/GLHtyC, gloJ/GLHtyD and hydroxylated at C-3 by the dioxygenase gloM/GLOXY1), 3R-hydroxyl-L-glutamine (generated from L-glutamine probably by the dioxygenase gloE/GLOXY3) and 3S-hydroxyl-L-proline (generated from L-proline by the dioxygenase gloF/GLOXY2 to yield pneumocandin B0), or 3S-hydroxyl-4S-methyl-L-proline (generated from L-leucine by the dioxygenase gloC/GLOXY4 to yield pneumocandin A0) are sequentially added to the growing chain. The last C domain of gloA/GLNRPS4 is proposed to be responsible for cyclization by condensation to form the peptide bond between L-ornithine and 3S-hydroxyl-4S-methyl-L-proline (for pneumocandin A0) or 3S-hydroxyl-L-proline (for pneumocandin B0). Finally, the subsequent C-4 hydroxylation of 3S-hydroxyl-L-homotyrosine and L-ornithine dihydroxylation at C-4 and C-5 are performed by the cytochrome P450 monooxygenases gloP/GLP450-1 and gloO/GLP450-2, respectively. This Glarea lozoyensis (strain ATCC 20868 / MF5171) protein is Probable thioesterase gloN.